The chain runs to 466 residues: Chromosomal replication initiator protein DnaA (466 aa).

Residues 1–86 are domain I, interacts with DnaA modulators; it reads MSLSLWQQCL…EVGTKPVTQT (86 aa). A domain II region spans residues 86-129; sequence TLKTPVHNVVAPTQTTTAQPQRVAPAARSGWDNVPAPAEPTYRS. The interval 130-346 is domain III, AAA+ region; sequence NVNVKHTFDN…GALNRVIANA (217 aa). 4 residues coordinate ATP: G174, G176, K177, and T178. The interval 347–466 is domain IV, binds dsDNA; that stretch reads NFTGRAITID…FSNLIRTLSS (120 aa).

The protein belongs to the DnaA family. Oligomerizes as a right-handed, spiral filament on DNA at oriC.

The protein localises to the cytoplasm. Plays an essential role in the initiation and regulation of chromosomal replication. ATP-DnaA binds to the origin of replication (oriC) to initiate formation of the DNA replication initiation complex once per cell cycle. Binds the DnaA box (a 9 base pair repeat at the origin) and separates the double-stranded (ds)DNA. Forms a right-handed helical filament on oriC DNA; dsDNA binds to the exterior of the filament while single-stranded (ss)DNA is stabiized in the filament's interior. The ATP-DnaA-oriC complex binds and stabilizes one strand of the AT-rich DNA unwinding element (DUE), permitting loading of DNA polymerase. After initiation quickly degrades to an ADP-DnaA complex that is not apt for DNA replication. Binds acidic phospholipids. The chain is Chromosomal replication initiator protein DnaA from Salmonella gallinarum (strain 287/91 / NCTC 13346).